The following is a 360-amino-acid chain: MNSPLRGIWLWLPLLLTWLTPEVSSSWWYMGATGGSSRVMCDNVPGLVSSQRQLCHRHPDVMRAIGLGVTEWTSECQYQFRQHRWNCNTLDRDHSLFGRVLLRSSRESAFVYAISSAGVVFAVTRACSQGEVKSCSCDPKKMGSGKDSKGVFDWGGCSDNIDYGIKFARAFVDAKERKGKDARALMNLHNNRAGRKSVKRFLKQECKCHGVSGSCSLRTCWLAMADFRKTGDYLWRKYNGAIQVVMNQDGTGFTVANERFKKPTKNDLVYFENSPDYCIRDRETGSLGTAGRVCNLTSRGMDSCEVMCCGRGYDTSHVTRMIKCGCKFHWCCAVRCQDCLEALDVHTCKAPKNADWKSPT.

The N-terminal stretch at M1 to S25 is a signal peptide. Cystine bridges form between C76-C87, C127-C135, C137-C157, C206-C220, C208-C215, C278-C309, C294-C304, C308-C348, C324-C339, C326-C336, and C331-C332. A lipid anchor (O-palmitoleoyl serine; by PORCN) is attached at S212. N295 carries an N-linked (GlcNAc...) asparagine glycan.

It belongs to the Wnt family. In terms of processing, palmitoleoylation is required for efficient binding to frizzled receptors. Depalmitoleoylation leads to Wnt signaling pathway inhibition.

The protein resides in the secreted. The protein localises to the extracellular space. It is found in the extracellular matrix. In terms of biological role, ligand for members of the frizzled family of seven transmembrane receptors. Functions in the canonical Wnt signaling pathway that results in activation of transcription factors of the TCF/LEF family. Functions as a upstream regulator of FGF10 expression. Plays an important role in embryonic lung development. May contribute to embryonic brain development by regulating the proliferation of dopaminergic precursors and neurons. This Callithrix jacchus (White-tufted-ear marmoset) protein is Protein Wnt-2 (WNT2).